The primary structure comprises 168 residues: MKVEIGKIVNTHGIKGEIKVKSNSDFTETRFQPGELVIIERKNKEPLEFTIASYRMHKGLHMLTFEGINNINDIEYLKGETIMQERDHEEIELGEHEFYYSDIIGCTVFDDDDTPIGRVTEIFETGANDVWVVKGDKEYLIPYIADVVKDIDVEGRRIQITPMEGLLD.

Positions 95–166 constitute a PRC barrel domain; that stretch reads EHEFYYSDII…RIQITPMEGL (72 aa).

It belongs to the RimM family. In terms of assembly, binds ribosomal protein uS19.

The protein localises to the cytoplasm. An accessory protein needed during the final step in the assembly of 30S ribosomal subunit, possibly for assembly of the head region. Essential for efficient processing of 16S rRNA. May be needed both before and after RbfA during the maturation of 16S rRNA. It has affinity for free ribosomal 30S subunits but not for 70S ribosomes. This is Ribosome maturation factor RimM from Staphylococcus saprophyticus subsp. saprophyticus (strain ATCC 15305 / DSM 20229 / NCIMB 8711 / NCTC 7292 / S-41).